Here is a 465-residue protein sequence, read N- to C-terminus: A-type ATP synthase subunit B (465 aa).

Belongs to the ATPase alpha/beta chains family. As to quaternary structure, has multiple subunits with at least A(3), B(3), C, D, E, F, H, I and proteolipid K(x).

The protein localises to the cell membrane. Functionally, component of the A-type ATP synthase that produces ATP from ADP in the presence of a proton gradient across the membrane. The B chain is a regulatory subunit. The sequence is that of A-type ATP synthase subunit B from Thermococcus kodakarensis (strain ATCC BAA-918 / JCM 12380 / KOD1) (Pyrococcus kodakaraensis (strain KOD1)).